The primary structure comprises 236 residues: MNTTPDMPTPRALRELTPLEARILGVLVEKQHTVPDTYPLSLNALTAGCNQKTARSPVMNVSEDEVTTAIDSLKHLSLVMEGSSSRVPRFEHNMNRVLGIPSQAIALLTILLLRGPQTAAELRLNSARLHGFADISSVEAFLDELAARAQPLVIRLPRAAGARENRWLHLMCGEVNVADFVGPDTGGGTDSVPPSEFEALKAEQKRLADEVARLNALVQRMATELGIDVDAPGDAG.

This sequence belongs to the UPF0502 family.

In Burkholderia ambifaria (strain ATCC BAA-244 / DSM 16087 / CCUG 44356 / LMG 19182 / AMMD) (Burkholderia cepacia (strain AMMD)), this protein is UPF0502 protein Bamb_4889.